A 1704-amino-acid polypeptide reads, in one-letter code: Nonribosomal peptide synthetase ivoA (1704 aa).

An adenylation region spans residues 234-620; sequence EEQAIARPDQ…HGRKDLEVKI (387 aa). The Carrier domain maps to 748-827; that stretch reads NLISDPSDSM…EMATKTSAVE (80 aa). S785 is subject to O-(pantetheine 4'-phosphoryl)serine. Positions 840 to 1266 are epimerization (E) domain; the sequence is FPLSPVQQMY…QELLETAVER (427 aa). The condensation stretch occupies residues 1325-1477; it reads VQGDWTIEKT…AQSSTPSARK (153 aa).

It belongs to the NRP synthetase family.

The enzyme catalyses L-tryptophan + ATP + H2O = D-tryptophan + AMP + diphosphate + H(+). It functions in the pathway pigment biosynthesis. Functionally, nonribosomal peptide synthetase; part of the pathway that mediates the biosynthesis of the gray-brown conidiophore pigment. The first step of the pathway is performed by the nonribosomal peptide synthetase ivoA that catalyzes ATP-dependent unidirectional stereoinversion of L-tryptophan to D-tryptophan with complete conversion. While the stereoinversion is catalyzed by the epimerization (E) domain of ivoA, the terminal condensation (C) domain stereoselectively hydrolyzes D-tryptophanyl-S-phosphopantetheine thioester and thus represents a non-canonical C domain function. D-tryptophan is acetylated, probably by an endogenous acetyltransferase. N-acetyltryptophan is further 6-hydroxylated into N-acetyl-6-hydroxytryptophan (AHT) by the cytochrome P450 monooxygenase ivoC. N-acetyl-6-hydroxytryptophan is substrate of the N-acetyl-6-hydroxytryptophan oxidase ivoB to produce the gray-brown conidiophore pigment. This is Nonribosomal peptide synthetase ivoA from Emericella nidulans (strain FGSC A4 / ATCC 38163 / CBS 112.46 / NRRL 194 / M139) (Aspergillus nidulans).